Reading from the N-terminus, the 667-residue chain is MADIQSRVDELHRLLNQYSYEYYVKDNPSVPDSEYDKLLHELIDIETQHPEYRTADSPTVRVGGSAQSTFEKVNHDTPMLSLGNAFNEEDLRKFDQRIRDNIGNVEYMCELKIDGLAVSLKYENGRFVQGLTRGDGTTGEDITENLKTIHAIPLKINESRTFEVRGEAYMPRKSFVNLNEAKAANEEQPFANPRNAAAGSLRQLDSKLAAKRKLSVFLYSVNDFTQFNADTQSEALDELDQLGFKTNQERQRVQTIEEVMTYIDKWTKQRENLPYDIDGIVIKVNALEQQETLGFTQKSPRWAIAYKFPAEEVVTELLDIELSIGRTGVVTPTAVLEPVRVAGTTVSRASLHNEDLIHDKDIRIGDSVVIKKAGDIIPEVIKSVLDRRPDDAEIYHMPSHCPSCEHELVRIEGEVALRCINPKCQAQLVEGLIHFVSRQAMNIDGLGTKIIQQLYENEKIKDVADIFYLTKEDLLPLDRMGEKKVDNLLNAIEKAKSNSLEQLLFGLGIRHLGVKASQVIAEKYGTIDELFHVTEEALMDIHDVGHKLAQSVVTYLENEDIRALIDKLKAKNVNMIYKGVKTTELEGHPDFKDKTIVLTGKLYQMTRNEASNWLALQGAKVTNSVTKNTDLVIAGEDAGSKLAKAEKFGTEIWSEEAFVQKQNEIEG.

NAD(+) contacts are provided by residues 32 to 36 (DSEYD), 81 to 82 (SL), and E110. The active-site N6-AMP-lysine intermediate is K112. Positions 133, 167, 283, and 307 each coordinate NAD(+). Zn(2+)-binding residues include C401, C404, C419, and C424. A BRCT domain is found at 586 to 667 (EGHPDFKDKT…FVQKQNEIEG (82 aa)).

This sequence belongs to the NAD-dependent DNA ligase family. LigA subfamily. Requires Mg(2+) as cofactor. Mn(2+) serves as cofactor.

It catalyses the reaction NAD(+) + (deoxyribonucleotide)n-3'-hydroxyl + 5'-phospho-(deoxyribonucleotide)m = (deoxyribonucleotide)n+m + AMP + beta-nicotinamide D-nucleotide.. Functionally, DNA ligase that catalyzes the formation of phosphodiester linkages between 5'-phosphoryl and 3'-hydroxyl groups in double-stranded DNA using NAD as a coenzyme and as the energy source for the reaction. It is essential for DNA replication and repair of damaged DNA. This chain is DNA ligase, found in Staphylococcus saprophyticus subsp. saprophyticus (strain ATCC 15305 / DSM 20229 / NCIMB 8711 / NCTC 7292 / S-41).